Reading from the N-terminus, the 130-residue chain is Ribosome-binding factor A (130 aa).

It belongs to the RbfA family. Monomer. Binds 30S ribosomal subunits, but not 50S ribosomal subunits or 70S ribosomes.

Its subcellular location is the cytoplasm. Its function is as follows. One of several proteins that assist in the late maturation steps of the functional core of the 30S ribosomal subunit. Associates with free 30S ribosomal subunits (but not with 30S subunits that are part of 70S ribosomes or polysomes). Required for efficient processing of 16S rRNA. May interact with the 5'-terminal helix region of 16S rRNA. This chain is Ribosome-binding factor A, found in Flavobacterium psychrophilum (strain ATCC 49511 / DSM 21280 / CIP 103535 / JIP02/86).